We begin with the raw amino-acid sequence, 81 residues long: Large ribosomal subunit protein bL31B (81 aa).

Belongs to the bacterial ribosomal protein bL31 family. Type B subfamily. As to quaternary structure, part of the 50S ribosomal subunit.

This is Large ribosomal subunit protein bL31B from Borrelia garinii subsp. bavariensis (strain ATCC BAA-2496 / DSM 23469 / PBi) (Borreliella bavariensis).